The sequence spans 338 residues: Phosphoribosylformylglycinamidine cyclo-ligase (338 aa).

This sequence belongs to the AIR synthase family.

The protein localises to the cytoplasm. It catalyses the reaction 2-formamido-N(1)-(5-O-phospho-beta-D-ribosyl)acetamidine + ATP = 5-amino-1-(5-phospho-beta-D-ribosyl)imidazole + ADP + phosphate + H(+). The protein operates within purine metabolism; IMP biosynthesis via de novo pathway; 5-amino-1-(5-phospho-D-ribosyl)imidazole from N(2)-formyl-N(1)-(5-phospho-D-ribosyl)glycinamide: step 2/2. This is Phosphoribosylformylglycinamidine cyclo-ligase from Thermoplasma volcanium (strain ATCC 51530 / DSM 4299 / JCM 9571 / NBRC 15438 / GSS1).